The following is a 431-amino-acid chain: Serine--tRNA ligase (431 aa).

237–239 (TAE) is an L-serine binding site. Residue 268–270 (RSE) coordinates ATP. Residue Glu-291 participates in L-serine binding. ATP is bound at residue 355–358 (EISS). Residue Ser-390 participates in L-serine binding.

It belongs to the class-II aminoacyl-tRNA synthetase family. Type-1 seryl-tRNA synthetase subfamily. As to quaternary structure, homodimer. The tRNA molecule binds across the dimer.

It is found in the cytoplasm. It carries out the reaction tRNA(Ser) + L-serine + ATP = L-seryl-tRNA(Ser) + AMP + diphosphate + H(+). It catalyses the reaction tRNA(Sec) + L-serine + ATP = L-seryl-tRNA(Sec) + AMP + diphosphate + H(+). It participates in aminoacyl-tRNA biosynthesis; selenocysteinyl-tRNA(Sec) biosynthesis; L-seryl-tRNA(Sec) from L-serine and tRNA(Sec): step 1/1. In terms of biological role, catalyzes the attachment of serine to tRNA(Ser). Is also able to aminoacylate tRNA(Sec) with serine, to form the misacylated tRNA L-seryl-tRNA(Sec), which will be further converted into selenocysteinyl-tRNA(Sec). This Neisseria gonorrhoeae (strain NCCP11945) protein is Serine--tRNA ligase.